Consider the following 305-residue polypeptide: Peroxisome assembly protein 26 (305 aa).

Residues M1–R20 are disordered. Residues M1–H246 lie on the Cytoplasmic side of the membrane. A helical; Signal-anchor for type II membrane protein membrane pass occupies residues F247–V267. The Peroxisomal matrix portion of the chain corresponds to R268–D305.

The protein belongs to the peroxin-26 family. Interacts (via its cytoplasmic domain) with PEX6; interaction is direct and is ATP-dependent. Interacts with PEX1; interaction is indirect and is mediated via interaction with PEX6. In terms of tissue distribution, widely expressed. Highly expressed in kidney, liver, brain and skeletal muscles. Expressed at intermediate level in pancreas, placenta and heart. Weakly expressed in lung.

It is found in the peroxisome membrane. Peroxisomal docking factor that anchors PEX1 and PEX6 to peroxisome membranes. PEX26 is therefore required for the formation of the PEX1-PEX6 AAA ATPase complex, a complex that mediates the extraction of the PEX5 receptor from peroxisomal membrane. In Homo sapiens (Human), this protein is Peroxisome assembly protein 26.